We begin with the raw amino-acid sequence, 491 residues long: Immediate early protein IE1 (491 aa).

A compositionally biased stretch (basic and acidic residues) spans 1-11 (MESSAKRKMDP). The tract at residues 1 to 24 (MESSAKRKMDPDNPDEGPSSKVPR) is nuclear localization signal. The disordered stretch occupies residues 1 to 30 (MESSAKRKMDPDNPDEGPSSKVPRPETPVT). Residues 132–346 (ILDKVHEPFE…SVMKRRIEEI (215 aa)) are interaction with host PML, interference with PML sumoylation and disruption of PML-associated nuclear bodies. The interaction with host STAT2 stretch occupies residues 373–445 (AIAEESDEEE…EEGAQEERED (73 aa)). The modulation of STAT3/STAT1 signaling stretch occupies residues 410–420 (ATIPLSSVIVA). The tract at residues 410–445 (ATIPLSSVIVAENSDQEESEQSDEEEEEGAQEERED) is interaction with host STAT3. Residues 421–472 (ENSDQEESEQSDEEEEEGAQEEREDTVSVKSEPVSEIEEVAPEEEEDGAEEP) form an acidic region. Positions 421 to 491 (ENSDQEESEQ…PMVTRSKADQ (71 aa)) are disordered. Acidic residues predominate over residues 423–444 (SDQEESEQSDEEEEEGAQEERE). Residues 449 to 452 (VKSE) form an interaction with host SUMO1 region. Lys-450 is covalently cross-linked (Glycyl lysine isopeptide (Lys-Gly) (interchain with G-Cter in SUMO)). Residues 455–470 (SEIEEVAPEEEEDGAE) are compositionally biased toward acidic residues. The segment at 475–491 (SGGKSTHPMVTRSKADQ) is chromosome-tethering domain (CTD), binding to histones.

Belongs to the HHV-5 IE1 protein family. As to quaternary structure, forms homodimers. Interacts with human p53/TP53; this interaction inhibits p53/TP53-dependent transactivation activity. Interacts with host STAT1. Interacts with host STAT2; this interaction promotes viral growth and counteracts the antiviral interferon response. May also interact with the host STAT1-STAT2 heterodimer. Interacts with host STAT3; this interaction leads to STAT3 nuclear accumulation and disruption of IL6-induced STAT3 phosphorylation. Interacts with host PML; this interaction inhibits host PML de novo sumoylation and probably inhibits PML regulation of type I and type II interferon-induced gene expression. Interacts with host DAXX. Interacts with host SP100. Interacts with host E2F1. Interacts with host RB1. Interacts with host HDAC1; this interaction inhibits histone deacetylation and promotes viral transcription. Interacts with host HDAC2; this interaction inhibits histone deacetylation and promotes viral transcription. Interacts with host HDAC3; this interaction inhibits histone deacetylation and promotes viral transcription. Interacts with host PLSCR1; this interaction inhibits IE1 transactivating activity. Post-translationally, sumoylated by host PML/nuclear domain 10. Sumoylation abolishes the interaction with host STAT2 and thus the IE1-mediated repression of interferon-stimulated genes.

The protein resides in the host nucleus. Functionally, plays an important role in transactivating viral early genes as well as activating its own promoter, probably by altering the viral chromatin structure. Expression of IE1 and IE2 proteins is critical for the establishment of lytic infection and reactivation from viral latency. Disrupts PML-associated ND10 nuclear bodies by interfering with host PML and SP100 sumoylation thereby altering the regulation of type I and type II interferon-induced gene expression. Promotes efficient viral growth by interacting with and directing host SP100 to degradation, leading to enhanced acetylation level of histones. In addition, functions in counteracting the host innate antiviral response. Inhibits the type I interferon pathway by directly interacting with and sequestrating host STAT2. Also targets type II interferon pathway by repressing IL6- and STAT3 target genes. Repression of STAT3 genes is due to STAT3 nuclear accumulation and disruption of IL6-induced STAT3 phosphorylation by IE1. This repression is followed by phosphorylation and activation of STAT1. Inhibits host ISG transcription by sequestering host ISGF3 in a PML- and STAT2- binding dependent manner. Alters host cell cycle progression, probably through its interaction with host E2F1 or RB1 that overcomes the RB1-mediated repression of E2F-responsive promoters. May act as a E3 ubiquitin ligase targeting several host proteins including HES1 and SP100A for ubiquitination and subsequent proteasomal degradation. Impairs the radial migration of immature neurons by downregulating Gap junction alpha-1 protein/GJA1 also via ubiquitination and degradation. The protein is Immediate early protein IE1 (UL123) of Human cytomegalovirus (strain Towne) (HHV-5).